The chain runs to 101 residues: Small ribosomal subunit protein uS14 (101 aa).

It belongs to the universal ribosomal protein uS14 family. As to quaternary structure, part of the 30S ribosomal subunit. Contacts proteins S3 and S10.

In terms of biological role, binds 16S rRNA, required for the assembly of 30S particles and may also be responsible for determining the conformation of the 16S rRNA at the A site. This chain is Small ribosomal subunit protein uS14, found in Orientia tsutsugamushi (strain Ikeda) (Rickettsia tsutsugamushi).